The chain runs to 26 residues: Thrombin-like enzyme LmrSP-3 (26 aa).

It belongs to the peptidase S1 family. Snake venom subfamily. Expressed by the venom gland.

The protein resides in the secreted. Its function is as follows. Thrombin-like snake venom serine protease that cleaves alpha-chain of fibrinogen (FGA) releases only fibrinopeptide A. Shows coagulant, esterase and amidase activities. This Lachesis muta rhombeata (Bushmaster) protein is Thrombin-like enzyme LmrSP-3.